The chain runs to 605 residues: Dolichyl-diphosphooligosaccharide--protein glycosyltransferase subunit 1 (605 aa).

Positions 1–22 (MEAPIVLLLLLWLALAPTPGSA) are cleaved as a signal peptide. The Lumenal portion of the chain corresponds to 23–437 (SSEAPPLVNE…FNKVLMLQEP (415 aa)). K185 is modified (N6-acetyllysine). N297 carries an N-linked (GlcNAc...) asparagine glycan. Residues 438 to 455 (LLVVAAFYILFFTVIIYV) traverse the membrane as a helical segment. Residues 456-605 (RLDFSITKDP…TKIDHILDAL (150 aa)) are Cytoplasmic-facing. Residue K536 is modified to N6-acetyllysine; alternate. K536 is covalently cross-linked (Glycyl lysine isopeptide (Lys-Gly) (interchain with G-Cter in SUMO2); alternate).

Belongs to the OST1 family. Component of the oligosaccharyltransferase (OST) complex. OST exists in two different complex forms which contain common core subunits RPN1, RPN2, OST48, OST4, DAD1 and TMEM258, either STT3A or STT3B as catalytic subunits, and form-specific accessory subunits. STT3A complex assembly occurs through the formation of 3 subcomplexes. Subcomplex 1 contains RPN1 and TMEM258, subcomplex 2 contains the STT3A-specific subunits STT3A, DC2/OSTC, and KCP2 as well as the core subunit OST4, and subcomplex 3 contains RPN2, DAD1, and OST48. The STT3A complex can form stable complexes with the Sec61 complex or with both the Sec61 and TRAP complexes. Interacts with TMEM35A/NACHO. In terms of processing, ubiquitinated by the ECS(ASB11) complex. Post-translationally, ufmylated by UFL1 in response to endoplasmic reticulum stress, promoting reticulophagy of endoplasmic reticulum sheets. As to expression, expressed in all tissues tested.

It localises to the endoplasmic reticulum membrane. It functions in the pathway protein modification; protein glycosylation. Subunit of the oligosaccharyl transferase (OST) complex that catalyzes the initial transfer of a defined glycan (Glc(3)Man(9)GlcNAc(2) in eukaryotes) from the lipid carrier dolichol-pyrophosphate to an asparagine residue within an Asn-X-Ser/Thr consensus motif in nascent polypeptide chains, the first step in protein N-glycosylation. N-glycosylation occurs cotranslationally and the complex associates with the Sec61 complex at the channel-forming translocon complex that mediates protein translocation across the endoplasmic reticulum (ER). All subunits are required for a maximal enzyme activity. The polypeptide is Dolichyl-diphosphooligosaccharide--protein glycosyltransferase subunit 1 (Rattus norvegicus (Rat)).